Reading from the N-terminus, the 130-residue chain is Small ribosomal subunit protein uS8 (130 aa).

Belongs to the universal ribosomal protein uS8 family. In terms of assembly, part of the 30S ribosomal subunit. Contacts proteins S5 and S12.

Functionally, one of the primary rRNA binding proteins, it binds directly to 16S rRNA central domain where it helps coordinate assembly of the platform of the 30S subunit. The polypeptide is Small ribosomal subunit protein uS8 (Aliivibrio fischeri (strain MJ11) (Vibrio fischeri)).